A 367-amino-acid polypeptide reads, in one-letter code: MHFPLIPMVKLEEIKQIFKPKLLPIIWNKTKLTLLDQSRLPFEKIYVDVTKVEEVSDAIRTMKVRGAPAIGITAGYGMVLAIQDSISLEKAISDLTKAKKILDESRPTAVNLMWATSRMLNKAKDLVEQGNAKSVKELKELLEIEANKIFEEEYEAELKIGLYGIEKVNDGDTILTQCNAGGLATGTGLGTALAPAKLANALGIKVSVIAPETRPWLQGSRLTVYELMEENIPVTLIADTAVGLVMFKKMVNSVMVGADRILSDGHVFNKIGTFKEAVIAHELGIPFYALAPSSTFDMISTVDQVKIEERSPDEVRSIKGVYISPKEVKVYNPVFDVTPPKYVSAIITEYGIIYPPFDKNMRRMLGK.

Substrate is bound by residues 65–67 (RGA), R106, and Q218. The active-site Proton donor is D259. 269–270 (NK) provides a ligand contact to substrate.

The protein belongs to the eIF-2B alpha/beta/delta subunits family. MtnA subfamily.

It carries out the reaction 5-(methylsulfanyl)-alpha-D-ribose 1-phosphate = 5-(methylsulfanyl)-D-ribulose 1-phosphate. Functionally, catalyzes the interconversion of methylthioribose-1-phosphate (MTR-1-P) into methylthioribulose-1-phosphate (MTRu-1-P). This is Putative methylthioribose-1-phosphate isomerase from Sulfolobus acidocaldarius (strain ATCC 33909 / DSM 639 / JCM 8929 / NBRC 15157 / NCIMB 11770).